The sequence spans 202 residues: MSRYRGPRVRIIRRLGTLPGLTSKTPESKPSYINQSTSSRKISQYRIRLEEKQKLRFHYGITERQLLKYVRIARKAKGSTGQVLLQLLEMRLDNIIFRLGLAPTIPGARQLVNHRHVLVNDCTVDIPSFRCKPQDVITIRDRQKSQNLMKRSRDSYEKYGIPNHLTFNSVQNIGLVNETIDRDWIGLKINELLVVEYYSRQA.

In terms of domain architecture, S4 RNA-binding spans 90-158; the sequence is MRLDNIIFRL…MKRSRDSYEK (69 aa).

Belongs to the universal ribosomal protein uS4 family. In terms of assembly, part of the 30S ribosomal subunit. Contacts protein S5. The interaction surface between S4 and S5 is involved in control of translational fidelity.

The protein localises to the plastid. Its subcellular location is the chloroplast. In terms of biological role, one of the primary rRNA binding proteins, it binds directly to 16S rRNA where it nucleates assembly of the body of the 30S subunit. Its function is as follows. With S5 and S12 plays an important role in translational accuracy. The sequence is that of Small ribosomal subunit protein uS4c (rps4) from Anthoceros angustus (Hornwort).